A 173-amino-acid chain; its full sequence is Adenine phosphoribosyltransferase (173 aa).

The protein belongs to the purine/pyrimidine phosphoribosyltransferase family. In terms of assembly, homodimer.

The protein resides in the cytoplasm. It catalyses the reaction AMP + diphosphate = 5-phospho-alpha-D-ribose 1-diphosphate + adenine. It participates in purine metabolism; AMP biosynthesis via salvage pathway; AMP from adenine: step 1/1. In terms of biological role, catalyzes a salvage reaction resulting in the formation of AMP, that is energically less costly than de novo synthesis. In Thermotoga maritima (strain ATCC 43589 / DSM 3109 / JCM 10099 / NBRC 100826 / MSB8), this protein is Adenine phosphoribosyltransferase.